Reading from the N-terminus, the 209-residue chain is 8-oxoguanine DNA glycosylase/AP lyase (209 aa).

Residues Lys132 and Asp150 contribute to the active site.

This sequence belongs to the type-2 OGG1 family.

The catalysed reaction is 2'-deoxyribonucleotide-(2'-deoxyribose 5'-phosphate)-2'-deoxyribonucleotide-DNA = a 3'-end 2'-deoxyribonucleotide-(2,3-dehydro-2,3-deoxyribose 5'-phosphate)-DNA + a 5'-end 5'-phospho-2'-deoxyribonucleoside-DNA + H(+). In terms of biological role, catalyzes the excision of an oxidatively damaged form of guanine (7,8-dihydro-8-oxoguanine = 8-oxoG) from DNA. Also cleaves the DNA backbone at apurinic/apyrimidinic sites (AP sites). The polypeptide is 8-oxoguanine DNA glycosylase/AP lyase (Picrophilus torridus (strain ATCC 700027 / DSM 9790 / JCM 10055 / NBRC 100828 / KAW 2/3)).